We begin with the raw amino-acid sequence, 424 residues long: Glutamate-1-semialdehyde 2,1-aminomutase (424 aa).

K264 is subject to N6-(pyridoxal phosphate)lysine.

This sequence belongs to the class-III pyridoxal-phosphate-dependent aminotransferase family. HemL subfamily. In terms of assembly, homodimer. Pyridoxal 5'-phosphate is required as a cofactor.

The protein resides in the cytoplasm. The enzyme catalyses (S)-4-amino-5-oxopentanoate = 5-aminolevulinate. It participates in porphyrin-containing compound metabolism; protoporphyrin-IX biosynthesis; 5-aminolevulinate from L-glutamyl-tRNA(Glu): step 2/2. In Aquifex aeolicus (strain VF5), this protein is Glutamate-1-semialdehyde 2,1-aminomutase (hemL).